The following is a 1183-amino-acid chain: RecQ-like DNA helicase BLM (1183 aa).

The interval 1 to 109 (MEEARAATNG…AAEQDSSAEH (109 aa)) is disordered. Polar residues predominate over residues 14-27 (ESQKLSNGEKSSQL). Positions 38-48 (ADIELEEDDYL) are enriched in acidic residues. A necessary for dimerization and homooligomerization region spans residues 110–162 (ADKGLHLEQQLYSVMEDICKLVDAIPLHELTSISCAKELLQQRELRRKLLADS). Disordered stretches follow at residues 164 to 215 (ALNT…LPSV), 260 to 323 (PKVN…GCWD), and 381 to 408 (GSAP…PLVH). Polar residues-rich tracts occupy residues 206-215 (TPKSTNLPSV) and 265-280 (KGST…SFNG). ATP is bound by residues 439–443 (FRTNQ) and 463–467 (GGGKS). The Helicase ATP-binding domain occupies 447-622 (INAALLGEDC…QNQLEMLKPQ (176 aa)). The DEAH box signature appears at 566 to 569 (DEAH). 3' overhang DNA-binding regions lie at residues 641 to 644 (KPKK) and 668 to 670 (SRH). One can recognise a Helicase C-terminal domain in the interval 648–795 (DCLEWIKKYH…TRQTHFNNLY (148 aa)). Position 753 (arginine 753) interacts with ATP. Residues 771–774 (RLRR) are 3' overhang DNA-binding. Zn(2+)-binding residues include cysteine 807, cysteine 826, cysteine 834, and cysteine 837. The DNA Holliday junction binding stretch occupies residues 865-910 (QVGGINGNRNTGSGRYTLNMMVDIFLGAKSAKIQSGIFGKGAAYSR). 3' overhang DNA-binding regions lie at residues 881–883 (TLN), 892–896 (AKSAK), and 931–937 (YITANDQ). An HRDC domain is found at 983 to 1063 (EEMVKKCLGE…DKYSEWTTPE (81 aa)). The interval 998 to 1015 (KTLGKIFDVHYFNIFSTS) is necessary for ssDNA and DNA Holliday junction binding. Positions 1068–1183 (QSVDTAPGSA…HFLQPSYAVL (116 aa)) are disordered. Over residues 1091–1101 (VTSSYFGGNAN) the composition is skewed to polar residues. Positions 1104 to 1120 (RKRKRLPNSGESKRKKT) match the Nuclear localization signal motif. Residues 1133–1142 (ARYRRARRAP) are compositionally biased toward basic residues. Low complexity predominate over residues 1143-1158 (GSRAAAPAQSSALRGA).

This sequence belongs to the helicase family. RecQ subfamily. As to quaternary structure, monomer. Homodimer (via N-terminus). Homotetramer (via N-terminus); dimer of dimers. Homohexamer (via N-terminus). Self-association negatively regulates DNA unwinding amplitude and rate. Oligomer complexes dissociate into monomer in presence of ATP. It depends on Zn(2+) as a cofactor.

Its subcellular location is the nucleus. It catalyses the reaction Couples ATP hydrolysis with the unwinding of duplex DNA by translocating in the 3'-5' direction.. The catalysed reaction is ATP + H2O = ADP + phosphate + H(+). Its function is as follows. ATP-dependent DNA helicase that unwinds single- and double-stranded DNA in a 3'-5' direction. Participates in DNA replication and repair. Involved in 5'-end resection of DNA during double-strand break (DSB) repair. Negatively regulates sister chromatid exchange (SCE). Stimulates DNA 4-way junction branch migration and DNA Holliday junction dissolution. Binds DNA. Binds single-stranded DNA (ssDNA), forked duplex DNA and DNA Holliday junction. This Gallus gallus (Chicken) protein is RecQ-like DNA helicase BLM (BLM).